Reading from the N-terminus, the 874-residue chain is Alanine--tRNA ligase (874 aa).

Zn(2+) is bound by residues His562, His566, Cys665, and His669.

This sequence belongs to the class-II aminoacyl-tRNA synthetase family. Zn(2+) serves as cofactor.

The protein resides in the cytoplasm. It catalyses the reaction tRNA(Ala) + L-alanine + ATP = L-alanyl-tRNA(Ala) + AMP + diphosphate. Functionally, catalyzes the attachment of alanine to tRNA(Ala) in a two-step reaction: alanine is first activated by ATP to form Ala-AMP and then transferred to the acceptor end of tRNA(Ala). Also edits incorrectly charged Ser-tRNA(Ala) and Gly-tRNA(Ala) via its editing domain. The chain is Alanine--tRNA ligase from Stutzerimonas stutzeri (strain A1501) (Pseudomonas stutzeri).